Reading from the N-terminus, the 529-residue chain is Zinc finger CCCH domain-containing protein 65 (529 aa).

The segment covering 1–10 (MADADARAPP) has biased composition (basic and acidic residues). Disordered stretches follow at residues 1–36 (MADA…EDEV) and 134–179 (PARK…GSYV). Positions 14–31 (PGATPIGSISPSSAAPAA) are enriched in low complexity. 3 consecutive C3H1-type zinc fingers follow at residues 108–136 (RPGE…HPAR), 237–265 (GSSQ…HRDG), and 285–313 (RPGE…HPDP). The interval 313-347 (PSNVASKDPQLEHENGDAPQQDVQGSSSQPNASIW) is disordered. Over residues 333 to 344 (QDVQGSSSQPNA) the composition is skewed to polar residues. 2 C3H1-type zinc fingers span residues 433 to 461 (RPGQ…HPRS) and 477 to 505 (KPDQ…HPFN).

The polypeptide is Zinc finger CCCH domain-containing protein 65 (Oryza sativa subsp. japonica (Rice)).